The chain runs to 313 residues: N-acetyl-gamma-glutamyl-phosphate reductase (313 aa).

Cys117 is a catalytic residue.

This sequence belongs to the NAGSA dehydrogenase family. Type 2 subfamily.

The protein localises to the cytoplasm. It carries out the reaction N-acetyl-L-glutamate 5-semialdehyde + phosphate + NADP(+) = N-acetyl-L-glutamyl 5-phosphate + NADPH + H(+). It participates in amino-acid biosynthesis; L-arginine biosynthesis; N(2)-acetyl-L-ornithine from L-glutamate: step 3/4. Functionally, catalyzes the NADPH-dependent reduction of N-acetyl-5-glutamyl phosphate to yield N-acetyl-L-glutamate 5-semialdehyde. This chain is N-acetyl-gamma-glutamyl-phosphate reductase, found in Burkholderia cenocepacia (strain HI2424).